A 218-amino-acid polypeptide reads, in one-letter code: Protein-L-isoaspartate O-methyltransferase (218 aa).

S60 is a catalytic residue.

This sequence belongs to the methyltransferase superfamily. L-isoaspartyl/D-aspartyl protein methyltransferase family.

It localises to the cytoplasm. It catalyses the reaction [protein]-L-isoaspartate + S-adenosyl-L-methionine = [protein]-L-isoaspartate alpha-methyl ester + S-adenosyl-L-homocysteine. Its function is as follows. Catalyzes the methyl esterification of L-isoaspartyl residues in peptides and proteins that result from spontaneous decomposition of normal L-aspartyl and L-asparaginyl residues. It plays a role in the repair and/or degradation of damaged proteins. The sequence is that of Protein-L-isoaspartate O-methyltransferase from Roseiflexus sp. (strain RS-1).